The primary structure comprises 159 residues: Transcriptional repressor NrdR (159 aa).

Residues 1-11 (MQCPSCQNTDS) are compositionally biased toward polar residues. The tract at residues 1 to 20 (MQCPSCQNTDSRVLESRSAD) is disordered. A zinc finger spans residues 3–34 (CPSCQNTDSRVLESRSADSGRSVRRRRECLNC). One can recognise an ATP-cone domain in the interval 49 to 139 (INVLKRSGAK…VYRQFNGIND (91 aa)).

This sequence belongs to the NrdR family. Zn(2+) serves as cofactor.

Functionally, negatively regulates transcription of bacterial ribonucleotide reductase nrd genes and operons by binding to NrdR-boxes. The chain is Transcriptional repressor NrdR from Prochlorococcus marinus (strain NATL1A).